Here is a 411-residue protein sequence, read N- to C-terminus: MAQINENYLKLPGSYLFSEIARRVNEFKVQNPDADIIRLGIGDVTRPLAPVVVEAMKQAVEEMGRAETFRGYGPEQGYDFLIEKIIANDYAPRGVQLGMDEVFVSDGAKSDTANFQEIFGVDNIMAVTDPVYPVYVDSNVMAGRTGNYDTEKGQYGRIIYLPCTEEGDMKPELPTAPVDMIYLCFPNNPTGMTLTKEELKVWVDYARENKAIILFDSAYEAFIREEGVPRSIYEVEGAREVAVEFRSFSKTAGFTGTRCAYTVVPKDIMIYDSTGEGHSLNKLWLRRQTTKFNGVSYPVQAGAAAVYTEEGKKQIQATIDYYMENARIIREGLQEAGFKVFGGVNAPYIWMKTPGTMGSWEFFDKLMTEAHVVGTPGAGFGANGEGFFRLTAFGTRENTEKAIERIKARMK.

Substrate contacts are provided by Tyr15 and Gly42. Pyridoxal 5'-phosphate is bound by residues Tyr72, 108 to 109, Tyr132, Asn188, Tyr219, and 247 to 249; these read AK and SFS. Residues Lys109, Tyr132, and Asn188 each contribute to the substrate site. Lys250 bears the N6-(pyridoxal phosphate)lysine mark. Pyridoxal 5'-phosphate contacts are provided by Arg258 and Asn293. Substrate contacts are provided by Asn293 and Arg389.

This sequence belongs to the class-I pyridoxal-phosphate-dependent aminotransferase family. LL-diaminopimelate aminotransferase subfamily. As to quaternary structure, homodimer. Pyridoxal 5'-phosphate serves as cofactor.

It carries out the reaction (2S,6S)-2,6-diaminopimelate + 2-oxoglutarate = (S)-2,3,4,5-tetrahydrodipicolinate + L-glutamate + H2O + H(+). It participates in amino-acid biosynthesis; L-lysine biosynthesis via DAP pathway; LL-2,6-diaminopimelate from (S)-tetrahydrodipicolinate (aminotransferase route): step 1/1. Functionally, involved in the synthesis of meso-diaminopimelate (m-DAP or DL-DAP), required for both lysine and peptidoglycan biosynthesis. Catalyzes the direct conversion of tetrahydrodipicolinate to LL-diaminopimelate. Is also able to catalyze the reverse reaction in vitro, i.e. the transamination of LL-diaminopimelate with 2-oxoglutarate to produce tetrahydrodipicolinate and glutamate. Can also use m-DAP instead of LL-DAP as the amino-group donor, and oxaloacetate or pyruvate as the amino-group acceptor. The chain is LL-diaminopimelate aminotransferase from Desulfitobacterium hafniense (strain DSM 10664 / DCB-2).